The following is a 373-amino-acid chain: Anhydro-N-acetylmuramic acid kinase (373 aa).

13–20 (GTSMDGID) contacts ATP.

It belongs to the anhydro-N-acetylmuramic acid kinase family.

The enzyme catalyses 1,6-anhydro-N-acetyl-beta-muramate + ATP + H2O = N-acetyl-D-muramate 6-phosphate + ADP + H(+). It functions in the pathway amino-sugar metabolism; 1,6-anhydro-N-acetylmuramate degradation. The protein operates within cell wall biogenesis; peptidoglycan recycling. Its function is as follows. Catalyzes the specific phosphorylation of 1,6-anhydro-N-acetylmuramic acid (anhMurNAc) with the simultaneous cleavage of the 1,6-anhydro ring, generating MurNAc-6-P. Is required for the utilization of anhMurNAc either imported from the medium or derived from its own cell wall murein, and thus plays a role in cell wall recycling. The protein is Anhydro-N-acetylmuramic acid kinase of Brucella suis (strain ATCC 23445 / NCTC 10510).